Here is a 282-residue protein sequence, read N- to C-terminus: NADPH-dependent 7-cyano-7-deazaguanine reductase (282 aa).

88–90 contributes to the substrate binding site; that stretch reads IES. Residue 90-91 coordinates NADPH; it reads SK. Catalysis depends on cysteine 189, which acts as the Thioimide intermediate. Aspartate 196 (proton donor) is an active-site residue. 228–229 is a substrate binding site; that stretch reads HE. 257-258 is an NADPH binding site; sequence RG.

The protein belongs to the GTP cyclohydrolase I family. QueF type 2 subfamily. As to quaternary structure, homodimer.

The protein localises to the cytoplasm. The enzyme catalyses 7-aminomethyl-7-carbaguanine + 2 NADP(+) = 7-cyano-7-deazaguanine + 2 NADPH + 3 H(+). The protein operates within tRNA modification; tRNA-queuosine biosynthesis. In terms of biological role, catalyzes the NADPH-dependent reduction of 7-cyano-7-deazaguanine (preQ0) to 7-aminomethyl-7-deazaguanine (preQ1). This chain is NADPH-dependent 7-cyano-7-deazaguanine reductase, found in Photorhabdus laumondii subsp. laumondii (strain DSM 15139 / CIP 105565 / TT01) (Photorhabdus luminescens subsp. laumondii).